A 608-amino-acid polypeptide reads, in one-letter code: Isocitrate dehydrogenase kinase/phosphatase (608 aa).

ATP contacts are provided by residues 327–333 (APGIKGL) and K348. Residue D383 is part of the active site. The tract at residues 589–608 (FDSTPDAGDGDSAGDAQRAA) is disordered.

It belongs to the AceK family.

Its subcellular location is the cytoplasm. It catalyses the reaction L-seryl-[isocitrate dehydrogenase] + ATP = O-phospho-L-seryl-[isocitrate dehydrogenase] + ADP + H(+). Functionally, bifunctional enzyme which can phosphorylate or dephosphorylate isocitrate dehydrogenase (IDH) on a specific serine residue. This is a regulatory mechanism which enables bacteria to bypass the Krebs cycle via the glyoxylate shunt in response to the source of carbon. When bacteria are grown on glucose, IDH is fully active and unphosphorylated, but when grown on acetate or ethanol, the activity of IDH declines drastically concomitant with its phosphorylation. The sequence is that of Isocitrate dehydrogenase kinase/phosphatase from Burkholderia ambifaria (strain MC40-6).